We begin with the raw amino-acid sequence, 392 residues long: UPF0229 protein CPE1333 (392 aa).

A disordered region spans residues 75-100 (VTTGTGEERRGDRISSDKRKAISNNK). Residues 80 to 94 (GEERRGDRISSDKRK) show a composition bias toward basic and acidic residues.

It belongs to the UPF0229 family.

This Clostridium perfringens (strain 13 / Type A) protein is UPF0229 protein CPE1333.